The sequence spans 248 residues: Granzyme-like protein 2 (248 aa).

The N-terminal stretch at 1–18 is a signal peptide; it reads MFLFLIFLVAVLPVNTEG. Positions 19–20 are cleaved as a propeptide — activation peptide; sequence GE. Residues 21–243 enclose the Peptidase S1 domain; the sequence is IVWGTESKPH…FIPWIQKTMK (223 aa). Cys-50 and Cys-66 form a disulfide bridge. Catalysis depends on charge relay system residues His-65 and Asp-108. 2 disulfides stabilise this stretch: Cys-142–Cys-207 and Cys-172–Cys-186. Asn-152 and Asn-180 each carry an N-linked (GlcNAc...) asparagine glycan. Ser-201 serves as the catalytic Charge relay system.

This sequence belongs to the peptidase S1 family. Granzyme subfamily. Duodenum, lung and spleen.

In terms of biological role, this enzyme is necessary for target cell lysis in cell-mediated immune responses. The chain is Granzyme-like protein 2 from Rattus norvegicus (Rat).